The following is a 141-amino-acid chain: Nuclear receptor 2C2-associated protein (141 aa).

Belongs to the NR2C2AP family.

It localises to the nucleus. In terms of biological role, may act as a repressor of nr2c2-mediated transactivation by suppressing the binding between nr2c2 and its response element in target genes. The sequence is that of Nuclear receptor 2C2-associated protein (nr2c2ap) from Danio rerio (Zebrafish).